The following is a 390-amino-acid chain: Cell division protein FtsZ (390 aa).

GTP-binding positions include 20–24 (GGGNN), 106–108 (GTG), glutamate 137, arginine 141, and aspartate 184.

This sequence belongs to the FtsZ family. As to quaternary structure, homodimer. Polymerizes to form a dynamic ring structure in a strictly GTP-dependent manner. Interacts directly with several other division proteins.

It is found in the cytoplasm. Essential cell division protein that forms a contractile ring structure (Z ring) at the future cell division site. The regulation of the ring assembly controls the timing and the location of cell division. One of the functions of the FtsZ ring is to recruit other cell division proteins to the septum to produce a new cell wall between the dividing cells. Binds GTP and shows GTPase activity. The sequence is that of Cell division protein FtsZ from Mycoplasmopsis pulmonis (strain UAB CTIP) (Mycoplasma pulmonis).